A 542-amino-acid polypeptide reads, in one-letter code: Chloride channel CLIC-like protein 1 (542 aa).

A signal peptide spans 1–18 (MLYSLLLCECLWLITAYA). The Lumenal segment spans residues 19–184 (HDDEWIDPTD…EEFFGVDPYN (166 aa)). A helical membrane pass occupies residues 185-205 (VFMVLLCLLCIVALVATELWT). The Cytoplasmic portion of the chain corresponds to 206-216 (YVRWYTQLKRV). The helical transmembrane segment at 217–237 (FFISFLISLGWNWMYLYKLAF) threads the bilayer. Topologically, residues 238–329 (AQHQAEVAKM…GEFIKALMKE (92 aa)) are lumenal. A helical membrane pass occupies residues 330 to 350 (IPVLLHIPVLIIMALAVLSFC). Residues 351-542 (YGAGKSVNML…PASTAVEVCG (192 aa)) are Cytoplasmic-facing. The segment at 369-394 (EAPQALQAGERRRQQKIDYRPHGGAG) is disordered. The span at 377 to 389 (GERRRQQKIDYRP) shows a compositional bias: basic and acidic residues. S438 and S464 each carry phosphoserine. A disordered region spans residues 452–542 (AREHPKVVPG…PASTAVEVCG (91 aa)). The span at 480–491 (ESTPTESSTESS) shows a compositional bias: low complexity. Residue T482 is modified to Phosphothreonine. S532 bears the Phosphoserine mark.

This sequence belongs to the chloride channel MCLC family. As to quaternary structure, homomultimers. Interacts with mitochondrial protein PIGBOS1 (via C-terminus); the interaction occurs at the mitochondria-associated endoplasmic reticulum (ER) membrane, a zone of contact between the ER and mitochondrial membranes, but does not appear to play a role in ER-mitochondria tethering and is not affected by ER stress. Interacts with CALR.

The protein resides in the endoplasmic reticulum membrane. It carries out the reaction chloride(in) = chloride(out). The catalysed reaction is bromide(in) = bromide(out). It catalyses the reaction nitrate(in) = nitrate(out). The enzyme catalyses fluoride(in) = fluoride(out). Anion-selective channel with Ca(2+)-dependent and voltage-independent gating. Permeable to small monovalent anions with selectivity for bromide &gt; chloride &gt; nitrate &gt; fluoride. Operates in the endoplasmic reticulum (ER) membrane where it mediates chloride efflux to compensate for the loss of positive charges from the ER lumen upon Ca(2+) release. Contributes to the maintenance of ER Ca(2+) pools and activation of unfolded protein response to prevent accumulation of misfolded proteins in the ER lumen. Particularly involved in ER homeostasis mechanisms underlying motor neurons and retinal photoreceptors survival. This chain is Chloride channel CLIC-like protein 1 (CLCC1), found in Bos taurus (Bovine).